Here is a 285-residue protein sequence, read N- to C-terminus: MLYMIGLGLGDAKDITVKGLEVVRRCSRVYLETYTSVLTVGKEVLEEFYERKLILADREEVEQEADNILKDADISDVAFLVVGDPFGATTHSDLILRATKLGIPYRVIHNASIMNAVGCCGLQLYKFGETVSIVFWTDTWRPESFFDKVKKNRQNGMHTLCLLDIKVKEQSLENLIKGRKIYEPPRYMSVNQAAQQLLEIVQNQRIRGEEPAVTEETLCVGLARVGAEDQKIAAGTLQQMSTVDLGGPLHSLIITGGSLHPLEMEMLSLFTIPENSSEAQSIGGL.

Residues leucine 9, aspartate 84, glycine 87, 112–113, and leucine 163 each bind S-adenosyl-L-methionine; that span reads SI. Serine 171 bears the Phosphoserine mark. The S-adenosyl-L-methionine site is built by valine 225 and histidine 250.

It belongs to the diphthine synthase family.

The catalysed reaction is 2-[(3S)-amino-3-carboxypropyl]-L-histidyl-[translation elongation factor 2] + 4 S-adenosyl-L-methionine = diphthine methyl ester-[translation elongation factor 2] + 4 S-adenosyl-L-homocysteine + 3 H(+). It functions in the pathway protein modification; peptidyl-diphthamide biosynthesis. Its function is as follows. S-adenosyl-L-methionine-dependent methyltransferase that catalyzes four methylations of the modified target histidine residue in translation elongation factor 2 (EF-2), to form an intermediate called diphthine methyl ester. The four successive methylation reactions represent the second step of diphthamide biosynthesis. This chain is Diphthine methyl ester synthase (DPH5), found in Bos taurus (Bovine).